A 422-amino-acid polypeptide reads, in one-letter code: Probable sucrose-phosphatase 2 (422 aa).

It belongs to the sucrose phosphatase family. Homodimer. It depends on Mg(2+) as a cofactor.

The enzyme catalyses sucrose 6(F)-phosphate + H2O = sucrose + phosphate. Its pathway is glycan biosynthesis; sucrose biosynthesis; sucrose from D-fructose 6-phosphate and UDP-alpha-D-glucose: step 2/2. Catalyzes the final step of sucrose synthesis. This chain is Probable sucrose-phosphatase 2 (SPP2), found in Arabidopsis thaliana (Mouse-ear cress).